The chain runs to 240 residues: NAD-dependent protein deacylase Sir2 (240 aa).

Residues 1–235 form the Deacetylase sirtuin-type domain; the sequence is MQVTVLSGAG…PTLLQRLPEL (235 aa). 8-28 contributes to the NAD(+) binding site; that stretch reads GAGISAESGVPTFRDAETGLW. Residues Tyr53 and Arg56 each contribute to the substrate site. 86–89 is a binding site for NAD(+); that stretch reads QNID. His104 serves as the catalytic Proton acceptor. Cys112, Cys115, Cys138, and Cys140 together coordinate Zn(2+). NAD(+) contacts are provided by residues 177-179, 203-205, and Ala221; these read GTS and NPE.

This sequence belongs to the sirtuin family. Class III subfamily. Interacts with both Ku and LigD; may form a trimeric complex during NHEJ. The cofactor is Zn(2+).

It is found in the cytoplasm. It carries out the reaction N(6)-succinyl-L-lysyl-[protein] + NAD(+) + H2O = 2''-O-succinyl-ADP-D-ribose + nicotinamide + L-lysyl-[protein]. The catalysed reaction is N(6)-acetyl-L-lysyl-[protein] + NAD(+) + H2O = 2''-O-acetyl-ADP-D-ribose + nicotinamide + L-lysyl-[protein]. In terms of biological role, NAD-dependent lysine deacetylase and desuccinylase that specifically removes acetyl and succinyl groups on target proteins. Modulates the activities of several proteins which are inactive in their acylated form. Involved in non-homologous end joining (NHEJ) repair of blunt, 5' overhang and 3' overhang DNA double strand breaks (DSB). Overexpression increases the efficiency of NHEJ of the above DSBs 2-fold with no effect on repair fidelity. The protein is NAD-dependent protein deacylase Sir2 (sir2) of Mycolicibacterium smegmatis (strain ATCC 700084 / mc(2)155) (Mycobacterium smegmatis).